Consider the following 513-residue polypeptide: Acyltransferase uat1 (513 aa).

Residue His158 is the Proton acceptor of the active site.

The protein belongs to the plant acyltransferase family.

The protein operates within secondary metabolite biosynthesis. Functionally, acyltransferase; part of the gene cluster that mediates the biosynthesis of the glycolipid biosurfactant ustilagic acid (UA). UA is a secreted cellobiose glycolipid that is toxic for many microorganisms and confers biocontrol activity to U.maydis. UA consists of 15,16-dihydroxypalmitic or 2,15,16-trihydroxypalmitic acid, which is O-glycosidically linked to cellobiose at its terminal hydroxyl group. In addition, the cellobiose moiety is acetylated and acylated with a short-chain hydroxy fatty acid. UA biosynthesis starts with omega-hydroxylation of palmitic acid catalyzed by the cytochrome P450 monooxygenase cyp1. Terminal hydroxylation of palmitic acid precedes subterminal hydroxylation catalyzed by the cytochrome P450 monooxygenase cyp2. Sequential glucosylation of the hydroxy fatty acid is probably catalyzed by the glycosyltransferase ugt1. The cellobiose lipid is further decorated by acetylation of the proximal glucose residue and by acylation with a short-chain beta-hydroxy fatty acid at the distal glucose residue. The acyltransferase uat1 may be a good candidate for catalyzing either acetylation or acylation of the cellobiose lipid. The fatty acid synthase fas2 may be involved in synthesis of the carbon backbone of the short-chain beta-hydroxy fatty acid esterified to the cellobiose disaccharide. The secreted UA consists of a mixture of both alpha-hydroxylated and non-hydroxylated glycolipids; therefore, alpha-hydroxylation of the long-chain fatty, catalyzed by the fatty acid hydroxylase ahd1, occurs late in UA biosynthesis and may be the last step before secretion. The protein is Acyltransferase uat1 of Mycosarcoma maydis (Corn smut fungus).